The chain runs to 233 residues: Leucyl/phenylalanyl-tRNA--protein transferase (233 aa).

It belongs to the L/F-transferase family.

Its subcellular location is the cytoplasm. The enzyme catalyses N-terminal L-lysyl-[protein] + L-leucyl-tRNA(Leu) = N-terminal L-leucyl-L-lysyl-[protein] + tRNA(Leu) + H(+). It catalyses the reaction N-terminal L-arginyl-[protein] + L-leucyl-tRNA(Leu) = N-terminal L-leucyl-L-arginyl-[protein] + tRNA(Leu) + H(+). It carries out the reaction L-phenylalanyl-tRNA(Phe) + an N-terminal L-alpha-aminoacyl-[protein] = an N-terminal L-phenylalanyl-L-alpha-aminoacyl-[protein] + tRNA(Phe). In terms of biological role, functions in the N-end rule pathway of protein degradation where it conjugates Leu, Phe and, less efficiently, Met from aminoacyl-tRNAs to the N-termini of proteins containing an N-terminal arginine or lysine. The sequence is that of Leucyl/phenylalanyl-tRNA--protein transferase from Klebsiella pneumoniae subsp. pneumoniae (strain ATCC 700721 / MGH 78578).